We begin with the raw amino-acid sequence, 264 residues long: Transformer-2 sex-determining protein (264 aa).

The segment at 1 to 96 (MDREPLSSGR…HKSREHPQAS (96 aa)) is disordered. The span at 13–22 (CSARYKHKRS) shows a compositional bias: basic residues. Residues 23–33 (ASSSSAGTTSS) are compositionally biased toward low complexity. S40 is subject to Phosphoserine. The segment covering 47 to 61 (SRRHQRSSSRRRSRS) has biased composition (basic residues). Over residues 71–85 (EPRHRSGRSSRDRER) the composition is skewed to basic and acidic residues. An RRM domain is found at 97 to 175 (RCIGVFGLNT…RRIRVDFSIT (79 aa)). The interval 176-196 (QRAHTPTPGVYLGRQPRGKAP) is linker. Residues 179-264 (HTPTPGVYLG…PQLRRTSSRY (86 aa)) form a disordered region. Residue T180 is modified to Phosphothreonine. Residues 191 to 206 (PRGKAPRSFSPRRGRR) are compositionally biased toward basic residues. Over residues 207-234 (VYHDRSASPYDNYRDRYDYRNDRYDRNL) the composition is skewed to basic and acidic residues. A phosphoserine mark is found at S212 and S214. The span at 235–250 (RRSPSRNRYTRNRSYS) shows a compositional bias: basic residues. At S254 the chain carries Phosphoserine.

The protein belongs to the splicing factor SR family. Extensively phosphorylated on serine residues in the RS domain. In terms of tissue distribution, isoform Tmaj and isoform Tmin are expressed in males and females. Isoform msTmaj and isoform msTmin are present only in male germ cells.

Its function is as follows. Required for female sex determination in somatic cells and for spermatogenesis in male germ cells. Positive regulator of female-specific splicing and/or polyadenylation of doublesex (dsx) pre-mRNA. Splicing requires an enhancer complex, dsxRE (dsx repeat element: which contains six copies of a 13-nucleotide repeat and a purine-rich enhancer (PRE)). DsxRE is formed through cooperative interactions between tra, tra2 and the sr proteins, and these interactions require both the repeat sequences and PRE. PRE is required for specific binding of tra2 to the dsxRE. Protein-RNA and protein-protein interactions are involved in tra-2 dependent activation and repression of alternative splicing. Together with tra-2, plays a role in switching fru splicing from the male-specific pattern to the female-specific pattern through activation of the female-specific fru 5'-splice site. This is Transformer-2 sex-determining protein (tra2) from Drosophila melanogaster (Fruit fly).